Reading from the N-terminus, the 277-residue chain is Putative pyruvate, phosphate dikinase regulatory protein (277 aa).

Residue 151-158 coordinates ADP; the sequence is GISRTSKT.

Belongs to the pyruvate, phosphate/water dikinase regulatory protein family. PDRP subfamily.

The catalysed reaction is N(tele)-phospho-L-histidyl/L-threonyl-[pyruvate, phosphate dikinase] + ADP = N(tele)-phospho-L-histidyl/O-phospho-L-threonyl-[pyruvate, phosphate dikinase] + AMP + H(+). The enzyme catalyses N(tele)-phospho-L-histidyl/O-phospho-L-threonyl-[pyruvate, phosphate dikinase] + phosphate + H(+) = N(tele)-phospho-L-histidyl/L-threonyl-[pyruvate, phosphate dikinase] + diphosphate. Its function is as follows. Bifunctional serine/threonine kinase and phosphorylase involved in the regulation of the pyruvate, phosphate dikinase (PPDK) by catalyzing its phosphorylation/dephosphorylation. This chain is Putative pyruvate, phosphate dikinase regulatory protein, found in Alkaliphilus metalliredigens (strain QYMF).